We begin with the raw amino-acid sequence, 1013 residues long: MQTSFHKFFLSMILAYSCCSLSGGGYAAEIMIPQGIYDGETLTVSFPYTVIGDPSGTTVFSAGELTLKNLDNSIAALPLSCFGNLLGSFTVLGRGHSLTFENIRTSTNGAALSDSANSGLFTIEGFKELSFSNCNSLLAVLPAATTNNGSQTPTTTSTPSNGTIYSKTDLLLLNNEKFSFYSNLVSGDGGAIDAKSLTVQGISKLCVFQENTAQADGGACQVVTSFSAMANEAPIAFIANVAGVRGGGIAAVQDGQQGVSSSTSTEDPVVSFSRNTAVEFDGNVARVGGGIYSYGNVAFLNNGKTLFLNNVASPVYIAAEQPTNGQASNTSDNYGDGGAIFCKNGAQAAGSNNSGSVSFDGEGVVFFSSNVAAGKGGAIYAKKLSVANCGPVQFLGNIANDGGAIYLGESGELSLSADYGDIIFDGNLKRTAKENAADVNGVTVSSQAISMGSGGKITTLRAKAGHQILFNDPIEMANGNNQPAQSSEPLKINDGEGYTGDIVFANGNSTLYQNVTIEQGRIVLREKAKLSVNSLSQTGGSLYMEAGSTLDFVTPQPPQQPPAANQLITLSNLHLSLSSLLANNAVTNPPTNPPAQDSHPAIIGSTTAGSVTISGPIFFEDLDDTAYDRYDWLGSNQKIDVLKLQLGTQPSANAPSDLTLGNEMPKYGYQGSWKLAWDPNTANNGPYTLKATWTKTGYNPGPERVASLVPNSLWGSILDIRSAHSAIQASVDGRSYCRGLWVSGVSNFFYHDRDALGQGYRYISGGYSLGANSYFGSSMFGLAFTEVFGRSKDYVVCRSNHHACIGSVYLSTKQALCGSYLFGDAFIRASYGFGNQHMKTSYTFAEESDVRWDNNCLVGEIGVGLPIVITPSKLYLNELRPFVQAEFSYADHESFTEEGDQARAFRSGHLMNLSVPVGVKFDRCSSTHPNKYSFMGAYICDAYRTISGTQTTLLSHQETWTTDAFHLARHGVIVRGSMYASLTSNIEVYGHGRYEYRDTSRGYGLSAGSKVRF.

A signal peptide spans 1–27 (MQTSFHKFFLSMILAYSCCSLSGGGYA). One can recognise an Autotransporter domain in the interval 733-1013 (GRSYCRGLWV…GLSAGSKVRF (281 aa)).

The protein belongs to the PMP outer membrane protein family.

The protein localises to the secreted. It is found in the cell wall. It localises to the cell outer membrane. The chain is Probable outer membrane protein PmpG (pmpG) from Chlamydia trachomatis serovar D (strain ATCC VR-885 / DSM 19411 / UW-3/Cx).